The chain runs to 360 residues: Alanine racemase (360 aa).

The active-site Proton acceptor; specific for D-alanine is lysine 36. Lysine 36 carries the N6-(pyridoxal phosphate)lysine modification. Arginine 132 serves as a coordination point for substrate. Catalysis depends on tyrosine 256, which acts as the Proton acceptor; specific for L-alanine. Position 304 (methionine 304) interacts with substrate.

Belongs to the alanine racemase family. The cofactor is pyridoxal 5'-phosphate.

The enzyme catalyses L-alanine = D-alanine. It participates in amino-acid biosynthesis; D-alanine biosynthesis; D-alanine from L-alanine: step 1/1. Functionally, catalyzes the interconversion of L-alanine and D-alanine. May also act on other amino acids. In Pasteurella multocida (strain Pm70), this protein is Alanine racemase (alr).